The sequence spans 101 residues: Small ribosomal subunit protein uS14 (101 aa).

The segment covering 1 to 10 has biased composition (basic and acidic residues); that stretch reads MAKNSMVERD. The segment at 1–20 is disordered; the sequence is MAKNSMVERDRKRRKLAQKY.

This sequence belongs to the universal ribosomal protein uS14 family. As to quaternary structure, part of the 30S ribosomal subunit. Contacts proteins S3 and S10.

In terms of biological role, binds 16S rRNA, required for the assembly of 30S particles and may also be responsible for determining the conformation of the 16S rRNA at the A site. The protein is Small ribosomal subunit protein uS14 of Halorhodospira halophila (strain DSM 244 / SL1) (Ectothiorhodospira halophila (strain DSM 244 / SL1)).